Here is a 197-residue protein sequence, read N- to C-terminus: NADH-quinone oxidoreductase subunit B (197 aa).

Residues cysteine 63, cysteine 64, cysteine 129, and cysteine 159 each coordinate [4Fe-4S] cluster.

It belongs to the complex I 20 kDa subunit family. NDH-1 is composed of 14 different subunits. Subunits NuoB, C, D, E, F, and G constitute the peripheral sector of the complex. [4Fe-4S] cluster serves as cofactor.

Its subcellular location is the cell inner membrane. It catalyses the reaction a quinone + NADH + 5 H(+)(in) = a quinol + NAD(+) + 4 H(+)(out). In terms of biological role, NDH-1 shuttles electrons from NADH, via FMN and iron-sulfur (Fe-S) centers, to quinones in the respiratory chain. The immediate electron acceptor for the enzyme in this species is believed to be a menaquinone. Couples the redox reaction to proton translocation (for every two electrons transferred, four hydrogen ions are translocated across the cytoplasmic membrane), and thus conserves the redox energy in a proton gradient. This is NADH-quinone oxidoreductase subunit B from Bacteroides thetaiotaomicron (strain ATCC 29148 / DSM 2079 / JCM 5827 / CCUG 10774 / NCTC 10582 / VPI-5482 / E50).